The following is a 513-amino-acid chain: MSNETATLVKLSAAEQAAAIKKGDVTSRELVEAHLKVIEAAEPSIKAFLKVSGDVALEQADAFDAKSAEDKAALPELAGVPIAIKDMIVTKGIETTAASKILEGWVPPYDATVIEKLKAAGMPILGKTNLDEFAQGSSTEHSAYQTTHNPWDTERVPGGSGGGSASAVAAFEAPIALGTDTGGSIRQPGALTGTVGVKPTYGGVSRFGAIAMASSLDQIGPVSRTVLDSALLQEIIGGHDKRDSTSIPEGPRPMVAAAREGAKRDLKGMKVGLIKELGGEGFQPGVEARFGEAVDKLKDMGAEVVEVSCPHIGYSLGAYYIIMPSEVSSNLARYDGMRYGLRVMPPAGVPQTAANMMAYTREAGFGDEVKRRIILGTYALSAGYYDAWYGSAQKVRTLIIEDFKKAFEQVDVLISPTSPSTAFKFGEKMDDPLAMYVNDIATIPANLAGMPAMSIPAGLSDDGLPVGFQFIAPQQRDEVMYKPAAALEAALEDGWNGPIWNDLKTPWLDGLGK.

Active-site charge relay system residues include Lys-85 and Ser-160. Catalysis depends on Ser-184, which acts as the Acyl-ester intermediate.

The protein belongs to the amidase family. GatA subfamily. As to quaternary structure, heterotrimer of A, B and C subunits.

It carries out the reaction L-glutamyl-tRNA(Gln) + L-glutamine + ATP + H2O = L-glutaminyl-tRNA(Gln) + L-glutamate + ADP + phosphate + H(+). Allows the formation of correctly charged Gln-tRNA(Gln) through the transamidation of misacylated Glu-tRNA(Gln) in organisms which lack glutaminyl-tRNA synthetase. The reaction takes place in the presence of glutamine and ATP through an activated gamma-phospho-Glu-tRNA(Gln). This is Glutamyl-tRNA(Gln) amidotransferase subunit A from Bifidobacterium longum subsp. infantis (strain ATCC 15697 / DSM 20088 / JCM 1222 / NCTC 11817 / S12).